Consider the following 619-residue polypeptide: Telomere repeat-binding protein 3 (619 aa).

In terms of domain architecture, Ubiquitin-like spans 324-403 (VKLSIKSFRI…LDNLGFTLEP (80 aa)). In terms of domain architecture, HTH myb-type spans 504–563 (AQRRTRRPFSVTEVEALVQAVEELGTGRWRDVKLRAFEDADHRTYVDLKDKWKTLVHTAS). The H-T-H motif DNA-binding region spans 532-559 (WRDVKLRAFEDADHRTYVDLKDKWKTLV). Residues 593–619 (QGKHQARGASKDPDMNRGGAFESGVSV) form a disordered region.

As to quaternary structure, homodimer and heterodimer with TRP1. As to expression, expressed ubiquitously. Highest expression in flowers and roots.

It is found in the nucleus. Binds specifically to the plant telomeric double-stranded DNA sequences. At least 2 repeats of telomeric sequences are required for binding. Induces DNA bending. The protein is Telomere repeat-binding protein 3 (TRP3) of Arabidopsis thaliana (Mouse-ear cress).